A 242-amino-acid polypeptide reads, in one-letter code: uncharacterized protein (242 aa).

In terms of domain architecture, S4 RNA-binding spans 2-62; the sequence is EKAYKILSVQ…VEKPSVIFED (61 aa). D93 is a catalytic residue.

It belongs to the pseudouridine synthase RluA family.

It catalyses the reaction a uridine in RNA = a pseudouridine in RNA. This is an uncharacterized protein from Helicobacter pylori (strain ATCC 700392 / 26695) (Campylobacter pylori).